Here is a 196-residue protein sequence, read N- to C-terminus: MKPQVVFVLGGPGAGKGTQCARIVEKYGYTHLSAGELLRDERKNPDSQYGELIEKYIKDGKIVPVEITISLLRREMDQTMAANAQKNKFLIDGFPRNQDNLQGWNKTMDGKADVSFVLFFDCNNEICIERCLERGKSSGRSDDNRESLEKRIQTYLQSTKPIIDLYEEMGKVRKIDASKSVDEVFDEVVKIFDKEG.

13 to 18 (GAGKGT) contacts ATP. At Ser33 the chain carries Phosphoserine. Residues 33 to 63 (SAGELLRDERKNPDSQYGELIEKYIKDGKIV) are NMP. Arg39 is an a ribonucleoside 5'-phosphate binding site. N6-acetyllysine is present on residues Lys43 and Lys55. A ribonucleoside 5'-phosphate is bound by residues 61-63 (KIV) and 93-96 (GFPR). Asn100 contributes to the CMP binding site. Position 106 is an N6-succinyllysine (Lys106). The LID stretch occupies residues 133-143 (ERGKSSGRSDD). Arg134 is a binding site for ATP. A ribonucleoside 5'-phosphate-binding residues include Arg140 and Arg151. Lys179 provides a ligand contact to ATP. Ser180 is modified (phosphoserine).

It belongs to the adenylate kinase family. UMP-CMP kinase subfamily. In terms of assembly, monomer. The cofactor is Mg(2+).

The protein resides in the nucleus. It is found in the cytoplasm. The enzyme catalyses CMP + ATP = CDP + ADP. The catalysed reaction is dCMP + ATP = dCDP + ADP. It carries out the reaction UMP + ATP = UDP + ADP. It catalyses the reaction a 2'-deoxyribonucleoside 5'-diphosphate + ATP = a 2'-deoxyribonucleoside 5'-triphosphate + ADP. The enzyme catalyses a ribonucleoside 5'-diphosphate + ATP = a ribonucleoside 5'-triphosphate + ADP. Functionally, catalyzes the phosphorylation of pyrimidine nucleoside monophosphates at the expense of ATP. Plays an important role in de novo pyrimidine nucleotide biosynthesis. Has preference for UMP and CMP as phosphate acceptors. Also displays broad nucleoside diphosphate kinase activity. The chain is UMP-CMP kinase from Bos taurus (Bovine).